Consider the following 704-residue polypeptide: MRPAVRALLACAVLGLCLADPERTVRWCTISTHEANKCASFRENVLRILESGPFVSCVKKTSHMDCIKAISNNEADAVTLDGGLVYEAGLKPNNLKPVVAEFHGTKDNPQTHYYAVAVVKKDTDFKLNELRGKKSCHTGLGRSAGWNIPMAKLYKELPDPQESIQRAAANFFSASCVPCADQSSFPKLCQLCAGKGTDKCACSNHEPYFGYSGAFKCLMEGAGDVAFVKHSTVFDNLPNPEDRKNYELLCGDNTRKSVDDYQECYLAMVPSHAVVARTVGGKEDVIWELLNHAQEHFGKDKPDNFQLFQSPHGKDLLFKDSADGFLKIPSKMDFELYLGYEYVTALQNLRESKPPDSSKDECMVKWCAIGHQERTKCDRWSGFSGGAIECETAENTEECIAKIMKGEADAMSLDGGYLYIAGKCGLVPVLAENYKTEGESCKNTPEKGYLAVAVVKTSDANINWNNLKDKKSCHTAVDRTAGWNIPMGLLYSKINNCKFDEFFSAGCAPGSPRNSSLCALCIGSEKGTGKECVPNSNERYYGYTGAFRCLVEKGDVAFVKDQTVIQNTDGNNNEAWAKNLKKENFEVLCKDGTRKPVTDAENCHLARGPNHAVVSRKDKATCVEKILNKQQDDFGKSVTDCTSNFCLFQSNSKDLLFRDDTKCLASIAKKTYDSYLGDDYVRAMTNLRQCSTSKLLEACTFHKP.

Positions 1–19 (MRPAVRALLACAVLGLCLA) are cleaved as a signal peptide. Transferrin-like domains are found at residues 25–351 (VRWC…NLRE) and 364–689 (VKWC…NLRQ). Cystine bridges form between Cys28–Cys66 and Cys38–Cys57. Arg42 carries the dimethylated arginine modification. Fe(3+) is bound by residues Asp81 and Tyr113. Disulfide bonds link Cys136/Cys217, Cys176/Cys192, Cys179/Cys200, Cys189/Cys202, and Cys250/Cys264. Residues Thr138, Arg142, Ala144, and Gly145 each contribute to the hydrogencarbonate site. Residue Tyr211 coordinates Fe(3+). A Fe(3+)-binding site is contributed by His272. 11 disulfide bridges follow: Cys362–Cys622, Cys367–Cys399, Cys377–Cys390, Cys424–Cys699, Cys441–Cys663, Cys473–Cys549, Cys497–Cys690, Cys507–Cys521, Cys518–Cys532, Cys589–Cys603, and Cys641–Cys646. Positions 414 and 449 each coordinate Fe(3+). Positions 475, 479, 481, and 482 each coordinate hydrogencarbonate. The N-linked (GlcNAc...) asparagine glycan is linked to Asn514. Tyr543 is a binding site for Fe(3+). A Fe(3+)-binding site is contributed by His611. Ser691 bears the Phosphoserine mark.

Belongs to the transferrin family. As to quaternary structure, monomer. Part of a complex composed of SLC40A1/ferroportin, TF/transferrin and HEPH/hephaestin that transfers iron from cells to transferrin. Expressed by the liver and secreted in plasma.

It localises to the secreted. Functionally, transferrins are iron binding transport proteins which can bind two Fe(3+) ions in association with the binding of an anion, usually bicarbonate. It is responsible for the transport of iron from sites of absorption and heme degradation to those of storage and utilization. Serum transferrin may also have a further role in stimulating cell proliferation. This chain is Serotransferrin (TF), found in Bos taurus (Bovine).